A 217-amino-acid polypeptide reads, in one-letter code: Small ribosomal subunit protein uS3 (217 aa).

One can recognise a KH type-2 domain in the interval 40-110; the sequence is IRDLINNSFN…EVYINIHEVR (71 aa).

This sequence belongs to the universal ribosomal protein uS3 family. Part of the 30S ribosomal subunit. Forms a tight complex with proteins S10 and S14.

In terms of biological role, binds the lower part of the 30S subunit head. Binds mRNA in the 70S ribosome, positioning it for translation. The sequence is that of Small ribosomal subunit protein uS3 from Rickettsia canadensis (strain McKiel).